Reading from the N-terminus, the 173-residue chain is dCTP deaminase (173 aa).

Residues 97–102 (RSSFAR) and Asp-113 contribute to the dCTP site. Residue Glu-123 is the Proton donor/acceptor of the active site. DCTP contacts are provided by Tyr-155 and Gln-162.

The protein belongs to the dCTP deaminase family. In terms of assembly, homotrimer.

The catalysed reaction is dCTP + H2O + H(+) = dUTP + NH4(+). Its pathway is pyrimidine metabolism; dUMP biosynthesis; dUMP from dCTP (dUTP route): step 1/2. In terms of biological role, catalyzes the deamination of dCTP to dUTP. The polypeptide is dCTP deaminase (Acidianus ambivalens (Desulfurolobus ambivalens)).